Here is a 949-residue protein sequence, read N- to C-terminus: RNA polymerase-associated protein RapA (949 aa).

Positions glutamate 164–asparagine 332 constitute a Helicase ATP-binding domain. Aspartate 177–threonine 184 is an ATP binding site. Positions aspartate 278–histidine 281 match the DEAH box motif. Residues arginine 474–histidine 628 form the Helicase C-terminal domain.

The protein belongs to the SNF2/RAD54 helicase family. RapA subfamily. As to quaternary structure, interacts with the RNAP. Has a higher affinity for the core RNAP than for the holoenzyme. Its ATPase activity is stimulated by binding to RNAP.

Its function is as follows. Transcription regulator that activates transcription by stimulating RNA polymerase (RNAP) recycling in case of stress conditions such as supercoiled DNA or high salt concentrations. Probably acts by releasing the RNAP, when it is trapped or immobilized on tightly supercoiled DNA. Does not activate transcription on linear DNA. Probably not involved in DNA repair. In Pseudomonas fluorescens (strain ATCC BAA-477 / NRRL B-23932 / Pf-5), this protein is RNA polymerase-associated protein RapA.